The primary structure comprises 381 residues: Ribosome assembly 1 protein (381 aa).

N-acetylmethionine is present on methionine 1. Disordered regions lie at residues methionine 1–glutamine 38, lysine 164–glutamate 216, and phenylalanine 350–lysine 381. At serine 172 the chain carries Phosphoserine. Residues asparagine 359 to asparagine 371 show a composition bias toward basic residues.

The protein resides in the nucleus. In terms of biological role, involved in a late nucleoplasmic step of 60S ribosomal subunit assembly. The chain is Ribosome assembly 1 protein (RSA1) from Saccharomyces cerevisiae (strain ATCC 204508 / S288c) (Baker's yeast).